A 192-amino-acid polypeptide reads, in one-letter code: NADH dehydrogenase [ubiquinone] iron-sulfur protein 3 (192 aa).

The protein belongs to the complex I 30 kDa subunit family. In terms of assembly, complex I is composed of about 45 different subunits. This is a component of the iron-sulfur (IP) fragment of the enzyme.

The protein localises to the mitochondrion inner membrane. The catalysed reaction is a ubiquinone + NADH + 5 H(+)(in) = a ubiquinol + NAD(+) + 4 H(+)(out). Its function is as follows. Core subunit of the mitochondrial membrane respiratory chain NADH dehydrogenase (Complex I) that is believed to belong to the minimal assembly required for catalysis. Complex I functions in the transfer of electrons from NADH to the respiratory chain. The immediate electron acceptor for the enzyme is believed to be ubiquinone. The protein is NADH dehydrogenase [ubiquinone] iron-sulfur protein 3 (NAD9) of Beta vulgaris (Sugar beet).